Consider the following 119-residue polypeptide: Hemerythrin subunit A (119 aa).

Residues His-26, His-55, Glu-59, His-74, His-78, His-107, and Asp-112 each coordinate Fe cation.

Belongs to the hemerythrin family.

Hemerythrin is a respiratory protein in blood cells of certain marine worms. The oxygen-binding site in each chain contains two iron atoms. The polypeptide is Hemerythrin subunit A (Sipunculus nudus (Sipunculan worm)).